The sequence spans 1097 residues: MSSSAIQVAKTVTYLPDLVEVQRASFKWFLDKGLIEELESFSPITDYTGKLELHFVGSEYRLKRPRHDVEEAKRRDATFASQMYVTCRLVNKETGEIKEQEVFIGELPLMTERGTFIINGAERVIVNQIVRSPGVYFKDEQDKNGRRTYNASVIPNRGAWLKFETDKNDLLHVRVDKTRKINAHVLMRAMGLSDNDVVDKLRHPEYYKKSIEAANDEGISSEDQALLELYKKLRPGEPPSVSGGQQLLQTRFFDPKRYDLGRVGRYKINKKLRLTIPDSVRTLTHEDVLSTLDYLINLELDVGGASLDDIDHLGNRRVRSVGELLQNQVRVGLNRLERIIKERMTVGETDSLTPAQLVNPKPLVAAIKEFFGSSQLSQFMDQTNPLAELTHKRRISALGPGGLTRERAGFAVRDIHPSHYGRLCPIETPEGPNAGLINSLATHARVNEYGFIETPFWRVENGVVQKSGDPIYLSADLEDECRVAPGDVATDADGQILAELIPVRYRQDFEKVPPEQVDYVQLSPVQVISVATSLIPFLEHDDANRALMGSNMQRQAVPLLRPERPLVGTGLETQVARDSGMVPISRVNGTVTFVDATAIVVRDEEGYDHTHFLQKYQRSNQDTCLNQRPIVRQGDPVIIGQVLADGSACEGGEIALGQNVLIAYMPWEGYNYEDAILVSERLVNDDLYTSVHIEKYEIEARQTKLGPEEITREIPNVAEESLGNLDEMGIIRIGAFVESGDILVGKVTPKGESDQPPEEKLLRAIFGEKARDVRDNSLRVPSTERGRVVDVRIYTREQGDELPPGANMVVRVYVAQRRKIQVGDKMAGRHGNKGIISRILPREDMPYLPDGTPVDICLNPLGVPSRMNVGQVFELLMGWAAANLDCRVKIVPFDEMYGPEKSQQTVQAYLKEAASQPGKDWIYNPEDPGKLLLRDGRTGEPFDQPVAVGYSHFLKLVHLVDDKIHARSTGPYSLVTQQPLGGKAQQGGQRLGEMEVWALEAYGAAYTLQELLTVKSDDMQGRNEALNAIVKGKPIPRPGTPESFKVLMRELQSLGLDIAVFTDEGKEVDLMQDVNPRRSTPSRPTYESLGVADYDED.

The segment at 1073-1097 (DVNPRRSTPSRPTYESLGVADYDED) is disordered.

The protein belongs to the RNA polymerase beta chain family. In terms of assembly, in cyanobacteria the RNAP catalytic core is composed of 2 alpha, 1 beta, 1 beta', 1 gamma and 1 omega subunit. When a sigma factor is associated with the core the holoenzyme is formed, which can initiate transcription.

The enzyme catalyses RNA(n) + a ribonucleoside 5'-triphosphate = RNA(n+1) + diphosphate. Its function is as follows. DNA-dependent RNA polymerase catalyzes the transcription of DNA into RNA using the four ribonucleoside triphosphates as substrates. The sequence is that of DNA-directed RNA polymerase subunit beta from Synechococcus sp. (strain CC9311).